The following is a 680-amino-acid chain: MKSQNKYSIRKFSVGASSILIATLLFLSGGQAQAAEKQVNMGNSQEDTVTAQSIGDQQTRENANYQRENGVDEQQHTENLTKNLHNDKTISEENHRKTDDLNKDQLKDDKKSSLNNKNIQRDTTKNNNANPSDVNQGLEQAINDGKQSKVASQQQSKEADNSQDSNANNNLPSQSRIKEAPSLNKLDQTSQREIVNETEIEKVQPQQNNQANDKITNYNFNNEQEVKPQKDEKTLSVSDLKNNQKSPVEPTKDNDKKNGLNLLKSSAVATLPNKGTKELTAKAKDDQTNKVAKQGQYKNQDPIVLVHGFNGFTDDINPSVLAHYWGGNKMNIRQDLEENGYKAYEASISAFGSNYDRAVELYYYIKGGRVDYGAAHAAKYGHERYGKTYEGIYKDWKPGQKVHLVGHSMGGQTIRQLEELLRNGNREEIEYQKKHGGEISPLFKGNHDNMISSITTLGTPHNGTHASDLAGNEALVRQIVFDIGKMFGNKNSRVDFGLAQWGLKQKPNESYIDYVKRVKQSNLWKSKDNGFYDLTREGATDLNRKTSLNPNIVYKTYTGEATHKALNSDRQKADLNMFFPFVITGNLIGKATEKEWRENDGLVSVISSQHPFNQAYTKATDKIQKGIWQVTPTKHDWDHVDFVGQDSSDTVRTREELQDFWHHLADDLVKTEKLTDTKQA.

The N-terminal stretch at 1 to 34 is a signal peptide; sequence MKSQNKYSIRKFSVGASSILIATLLFLSGGQAQA. A propeptide spanning residues 35-290 is cleaved from the precursor; it reads AEKQVNMGNS…AKAKDDQTNK (256 aa). The segment at 82-259 is disordered; it reads KNLHNDKTIS…PTKDNDKKNG (178 aa). The segment covering 84 to 112 has biased composition (basic and acidic residues); sequence LHNDKTISEENHRKTDDLNKDQLKDDKKS. A compositionally biased stretch (polar residues) spans 125–138; that stretch reads KNNNANPSDVNQGL. Residues 148 to 170 show a composition bias toward low complexity; it reads SKVASQQQSKEADNSQDSNANNN. Polar residues predominate over residues 204 to 223; that stretch reads QPQQNNQANDKITNYNFNNE. Residues 224-234 are compositionally biased toward basic and acidic residues; that stretch reads QEVKPQKDEKT. Positions 235 to 246 are enriched in polar residues; the sequence is LSVSDLKNNQKS. Residue serine 408 is the Nucleophile of the active site. Aspartate 600 functions as the Charge relay system in the catalytic mechanism. Aspartate 638 contributes to the Ca(2+) binding site. The Charge relay system role is filled by histidine 639. Residues aspartate 641, aspartate 646, and aspartate 649 each coordinate Ca(2+).

This sequence belongs to the AB hydrolase superfamily. Lipase family.

It is found in the secreted. The enzyme catalyses a triacylglycerol + H2O = a diacylglycerol + a fatty acid + H(+). This is Lipase 1 (lip1) from Staphylococcus aureus (strain MSSA476).